The sequence spans 325 residues: Collagen alpha-1(IX) chain (325 aa).

Positions 1-54 (PGQLGNSGKPGQQGPPGEVGPRGPRGLPGSRGPVGPEGSPGIPGKLGPLGSPGL) are enriched in low complexity. Disordered regions lie at residues 1–163 (PGQL…APTD) and 187–325 (RPDT…GPDK). The span at 198 to 208 (RPGPPGPPGPP) shows a compositional bias: pro residues. Residues 237 to 249 (PKGDLGEKGERGP) show a composition bias toward basic and acidic residues. Pro residues predominate over residues 292-304 (VPGPPGPPGPPGF).

It belongs to the fibril-associated collagens with interrupted helices (FACIT) family. Heterotrimer of an alpha 1(IX), an alpha 2(IX) and an alpha 3(IX) chain. Covalently linked to the telopeptides of type II collagen by lysine-derived cross-links. In terms of processing, prolines at the third position of the tripeptide repeating unit (G-X-Y) are hydroxylated in some or all of the chains.

Its subcellular location is the secreted. It is found in the extracellular space. The protein resides in the extracellular matrix. Structural component of hyaline cartilage and vitreous of the eye. This is Collagen alpha-1(IX) chain (Col9a1) from Rattus norvegicus (Rat).